The sequence spans 345 residues: Phosphoribosylformylglycinamidine cyclo-ligase (345 aa).

The protein belongs to the AIR synthase family.

It localises to the cytoplasm. It carries out the reaction 2-formamido-N(1)-(5-O-phospho-beta-D-ribosyl)acetamidine + ATP = 5-amino-1-(5-phospho-beta-D-ribosyl)imidazole + ADP + phosphate + H(+). It participates in purine metabolism; IMP biosynthesis via de novo pathway; 5-amino-1-(5-phospho-D-ribosyl)imidazole from N(2)-formyl-N(1)-(5-phospho-D-ribosyl)glycinamide: step 2/2. In Methylococcus capsulatus (strain ATCC 33009 / NCIMB 11132 / Bath), this protein is Phosphoribosylformylglycinamidine cyclo-ligase.